Consider the following 293-residue polypeptide: Methoxy mycolic acid synthase MmaA3 (293 aa).

S-adenosyl-L-methionine-binding positions include 39-40, 78-80, 100-105, 129-130, and isoleucine 142; these read YS, GCG, TLSKNQ, and WA. The active site involves cysteine 275.

This sequence belongs to the CFA/CMAS family.

The protein operates within lipid metabolism; mycolic acid biosynthesis. Its function is as follows. Involved in the biosynthesis of methoxymycolic acid. It catalyzes the O-methylation of the hydroxy group of the hydroxymycolate to form a methyl ether. The protein is Methoxy mycolic acid synthase MmaA3 (cmaB) of Mycobacterium bovis (strain ATCC BAA-935 / AF2122/97).